A 707-amino-acid polypeptide reads, in one-letter code: uncharacterized protein (707 aa).

Disordered regions lie at residues 15–122 (ALAK…LESY) and 667–707 (ESVQ…DIDE). 2 stretches are compositionally biased toward basic and acidic residues: residues 18–32 (KKND…DKGI) and 40–52 (EGKD…DVEK). Serine 112 is modified (phosphoserine). Residues 659 to 700 (EEQRKLIRESVQQDQEHKEQMRQKKKQALKSDDIELDDLSEE) are a coiled coil. The span at 692-707 (IELDDLSEEEAEDIDE) shows a compositional bias: acidic residues.

This sequence belongs to the NOC2 family.

It is found in the nucleus. The protein resides in the nucleolus. This is an uncharacterized protein from Schizosaccharomyces pombe (strain 972 / ATCC 24843) (Fission yeast).